We begin with the raw amino-acid sequence, 792 residues long: 5-methyltetrahydropteroyltriglutamate--homocysteine methyltransferase (792 aa).

5-methyltetrahydropteroyltri-L-glutamate is bound by residues 16–19 (RELK) and Lys-112. L-homocysteine-binding positions include 432–434 (IGS) and Glu-485. L-methionine contacts are provided by residues 432–434 (IGS) and Glu-485. 5-methyltetrahydropteroyltri-L-glutamate-binding positions include 516 to 517 (RC) and Trp-562. Asp-600 contributes to the L-homocysteine binding site. Asp-600 contributes to the L-methionine binding site. Glu-606 is a binding site for 5-methyltetrahydropteroyltri-L-glutamate. Zn(2+) contacts are provided by His-642, Cys-644, and Glu-666. His-695 functions as the Proton donor in the catalytic mechanism. Position 727 (Cys-727) interacts with Zn(2+).

This sequence belongs to the vitamin-B12 independent methionine synthase family. It depends on Zn(2+) as a cofactor.

It catalyses the reaction 5-methyltetrahydropteroyltri-L-glutamate + L-homocysteine = tetrahydropteroyltri-L-glutamate + L-methionine. Its pathway is amino-acid biosynthesis; L-methionine biosynthesis via de novo pathway; L-methionine from L-homocysteine (MetE route): step 1/1. Functionally, catalyzes the transfer of a methyl group from 5-methyltetrahydrofolate to homocysteine resulting in methionine formation. The polypeptide is 5-methyltetrahydropteroyltriglutamate--homocysteine methyltransferase (Cupriavidus necator (strain ATCC 17699 / DSM 428 / KCTC 22496 / NCIMB 10442 / H16 / Stanier 337) (Ralstonia eutropha)).